An 805-amino-acid chain; its full sequence is Leucine--tRNA ligase (805 aa).

The 'HIGH' region signature appears at 40-51 (PYPSGSGLHVGH). Positions 576–580 (KMSKS) match the 'KMSKS' region motif. Lys-579 serves as a coordination point for ATP.

Belongs to the class-I aminoacyl-tRNA synthetase family.

It is found in the cytoplasm. The enzyme catalyses tRNA(Leu) + L-leucine + ATP = L-leucyl-tRNA(Leu) + AMP + diphosphate. This chain is Leucine--tRNA ligase, found in Chlorobium phaeovibrioides (strain DSM 265 / 1930) (Prosthecochloris vibrioformis (strain DSM 265)).